The sequence spans 415 residues: All trans-polyprenyl-diphosphate synthase PDSS1 (415 aa).

A disordered region spans residues 16–35 (PAARSPGPGSPGRAGPLGPS). 3 residues coordinate isopentenyl diphosphate: Lys-134, Arg-137, and His-173. Asp-180 and Asp-184 together coordinate Mg(2+). Arg-190 is an isopentenyl diphosphate binding site.

Belongs to the FPP/GGPP synthase family. In terms of assembly, heterotetramer composed of 2 PDSS1/DPS1 and 2 PDSS2/DLP1 subunits. Requires Mg(2+) as cofactor.

The protein resides in the mitochondrion. The enzyme catalyses 7 isopentenyl diphosphate + (2E,6E)-farnesyl diphosphate = all-trans-decaprenyl diphosphate + 7 diphosphate. It carries out the reaction 6 isopentenyl diphosphate + (2E,6E)-farnesyl diphosphate = all-trans-nonaprenyl diphosphate + 6 diphosphate. The protein operates within cofactor biosynthesis; ubiquinone biosynthesis. In terms of biological role, heterotetrameric enzyme that catalyzes the condensation of farnesyl diphosphate (FPP), which acts as a primer, and isopentenyl diphosphate (IPP) to produce prenyl diphosphates of varying chain lengths and participates in the determination of the side chain of ubiquinone. Supplies nona and decaprenyl diphosphate, the precursors for the side chain of the isoprenoid quinones ubiquinone-9 (Q9)and ubiquinone-10 (Q10) respectively. The enzyme adds isopentenyl diphosphate molecules sequentially to farnesyl diphosphate with trans stereochemistry. This chain is All trans-polyprenyl-diphosphate synthase PDSS1, found in Homo sapiens (Human).